A 230-amino-acid chain; its full sequence is uncharacterized protein (230 aa).

7 helical membrane passes run 8-28 (SLIL…TMAF), 45-65 (SIIL…FIIF), 72-92 (LVLL…FLYL), 109-129 (PFSL…SVIS), 141-161 (IYVL…LLLA), 176-196 (MGIL…AIIF), and 203-223 (IYFL…LILF).

The protein to P.aeruginosa PA0043 and M.thermoautotrophicum MTH1451.

Its subcellular location is the cell membrane. This is an uncharacterized protein from Aquifex aeolicus (strain VF5).